Here is a 901-residue protein sequence, read N- to C-terminus: MRILKIQTLRGPNYWSIRRHKLIVMRLDLETLAETPSNEIPGFYEGLVEALPSLEGHYCSPGCHGGFLMRVREGTMMGHIVEHVALELQELAGMHVGFGRTRETATPGIYQVVIEYLNEEAGRYAGRAAVRLCQSIVDRGRYPKAELEQDIQDLKDLWRDASLGPSTEAIVKEAEKRGIPWMQLSARFLIQLGYGVNHKRMQATMTDKTGILGVELACDKEATKRILAASGVPVPRGTVINFLDDLEEAIEYVGGYPIVIKPLDGNHGRGITIDIRSWEEAEAAYEAARQVSRSIIVERYYVGRDHRVLVVDGKVVAVAERVPAHVIGNGRSTIAELIEEINQDPNRGDGHDKVLTKIELDRTSYQLLERAGYTLNSVPPKGTICYLRATANLSTGGTAVDRTDEIHPENIWLAQRVVKIIGLDIAGLDIVTTDISRPLRELDGVIVEVNAAPGFRMHVAPSQGIPRNVAGAVMDMLFPNEQSGRIPILSVTGTNGKTTTTRLLAHIYKQTGKVVGYTTTDGTYIGDYLVESGDNTGPQSAHVILQDPTVEVAVLETARGGILRSGLGFESANVGVVLNVAADHLGIGDIDTIDQLANLKSVVAESVYPDGYAVLNADDRRVAAMAEKTKANIAYFTMNPDSELVRKHIQKGGVAAVYENGYLSIVKGDWTHRIERAEQIPLTMGGRAPFMIANALAASLAAFVQNVSIEQIRAGLRTFRASVSQTPGRMNLFNLGNYHALVDYAHNPASYEAVGAFVRNWTSGQRIGVVGGPGDRRDEDFVTLGKLAAEIFDYIIVKEDDDTRGRPRGSASALITKGITQVKPDARYESILDETQAINKGLDMAPANGLVVILPESVSRAIKLIKLRGLVKEEIQQQNPSTTVIDNQNGVASSSVINTLL.

In terms of domain architecture, ATP-grasp spans 224 to 478 (KRILAASGVP…VAGAVMDMLF (255 aa)). 493-499 (GTNGKTT) lines the ATP pocket.

The protein in the C-terminal section; belongs to the MurCDEF family. In terms of assembly, homodimer.

It carries out the reaction [L-4-(L-arginin-2-N-yl)aspartate](n) + L-aspartate + ATP = [L-4-(L-arginin-2-N-yl)aspartate](n)-L-aspartate + ADP + phosphate + H(+). The catalysed reaction is [L-4-(L-arginin-2-N-yl)aspartate](n)-L-aspartate + L-arginine + ATP = [L-4-(L-arginin-2-N-yl)aspartate](n+1) + ADP + phosphate + H(+). Functionally, catalyzes the ATP-dependent polymerization of arginine and aspartate to multi-L-arginyl-poly-L-aspartic acid (cyanophycin; a water-insoluble reserve polymer). The sequence is that of Cyanophycin synthetase (cphA) from Trichormus variabilis (strain ATCC 29413 / PCC 7937) (Anabaena variabilis).